The chain runs to 130 residues: Probable 4-amino-4-deoxy-L-arabinose-phosphoundecaprenol flippase subunit ArnF (130 aa).

The Cytoplasmic portion of the chain corresponds to 1–4 (MGYG). The chain crosses the membrane as a helical span at residues 5-25 (WALFSVALVSAAQLLLKWVMM). Residues 26-44 (HLPPLGALRLWLDPAYAEP) are Periplasmic-facing. Residues 45 to 65 (LALLMGGLLAYVCSMGCWFMA) form a helical membrane-spanning segment. Residues 66–74 (LRRLPLNKA) are Cytoplasmic-facing. The chain crosses the membrane as a helical span at residues 75–95 (YPLLSLSYVLVAACALMIPEF). Topologically, residues 96–103 (NERFTFSR) are periplasmic. A helical transmembrane segment spans residues 104-124 (LMGVALICGGLLLICLPAGGK). The Cytoplasmic segment spans residues 125–130 (GDTPRR).

It belongs to the ArnF family. Heterodimer of ArnE and ArnF.

The protein localises to the cell inner membrane. Its pathway is bacterial outer membrane biogenesis; lipopolysaccharide biosynthesis. Its function is as follows. Translocates 4-amino-4-deoxy-L-arabinose-phosphoundecaprenol (alpha-L-Ara4N-phosphoundecaprenol) from the cytoplasmic to the periplasmic side of the inner membrane. The polypeptide is Probable 4-amino-4-deoxy-L-arabinose-phosphoundecaprenol flippase subunit ArnF (Sodalis glossinidius (strain morsitans)).